Consider the following 355-residue polypeptide: Methionine import ATP-binding protein MetN 1 (355 aa).

An ABC transporter domain is found at Ile-6–Val-245. Gly-42–Ser-49 contacts ATP.

This sequence belongs to the ABC transporter superfamily. Methionine importer (TC 3.A.1.24) family. In terms of assembly, the complex is composed of two ATP-binding proteins (MetN), two transmembrane proteins (MetI) and a solute-binding protein (MetQ).

The protein resides in the cell membrane. The catalysed reaction is L-methionine(out) + ATP + H2O = L-methionine(in) + ADP + phosphate + H(+). It catalyses the reaction D-methionine(out) + ATP + H2O = D-methionine(in) + ADP + phosphate + H(+). Functionally, part of the ABC transporter complex MetNIQ involved in methionine import. Responsible for energy coupling to the transport system. The polypeptide is Methionine import ATP-binding protein MetN 1 (Lactiplantibacillus plantarum (strain ATCC BAA-793 / NCIMB 8826 / WCFS1) (Lactobacillus plantarum)).